A 353-amino-acid polypeptide reads, in one-letter code: Guanine nucleotide-binding protein subunit beta-5 (353 aa).

7 WD repeats span residues 61-100 (GHGN…KEHA), 103-142 (MPCT…NENM), 151-192 (MHTN…QSFH), 194-236 (HGAD…QAFE), 237-276 (THES…EVAI), 278-320 (SKES…RVSI), and 323-352 (GHEN…LRVW).

Belongs to the WD repeat G protein beta family. Component of a complex composed of RGS9 (isoform RGS9-1), GNB5 and RGS9BP; within this complex, the presence of GNB5 stabilizes both itself and RGS9 and increases RGS9 GTPase-activating protein (GAP) activity. Interacts with RGS7, forming the RGS7-GNB5 complex; within this complex, the presence of GNB5 increases RGS7 GTPase-activating protein (GAP) activity. Interacts with GPR158; promotes the GTPase activator activity of the RGS7-GNB5 complex in absence of glycine, in contrast GTPase activator activity of the RGS7-GNB5 complex is inhibited in presence of glycine. Interacts with RGS6. Detected in brain.

It is found in the membrane. Functionally, enhances GTPase-activating protein (GAP) activity of regulator of G protein signaling (RGS) proteins, such as RGS7 and RGS9, hence involved in the termination of the signaling initiated by the G protein coupled receptors (GPCRs) by accelerating the GTP hydrolysis on the G-alpha subunits, thereby promoting their inactivation. Increases RGS7 GTPase-activating protein (GAP) activity, thereby regulating mood and cognition. Increases RGS9 GTPase-activating protein (GAP) activity, hence contributes to the deactivation of G protein signaling initiated by D(2) dopamine receptors. May play an important role in neuronal signaling, including in the parasympathetic, but not sympathetic, control of heart rate. This Rattus norvegicus (Rat) protein is Guanine nucleotide-binding protein subunit beta-5 (Gnb5).